Reading from the N-terminus, the 397-residue chain is Cathepsin E (397 aa).

The first 20 residues, 1–20 (MKPLLVLLLLLLLDLAQAQG), serve as a signal peptide directing secretion. Positions 21-59 (ALHRVPLRRHQSLRKKLRAQGQLSEFWRSHNLDMTRLSE) are cleaved as a propeptide — activation peptide. The 315-residue stretch at 79-393 (YFGTISIGTP…DRGNNQVGLA (315 aa)) folds into the Peptidase A1 domain. A glycan (N-linked (GlcNAc...) asparagine) is linked at Asn-91. The active site involves Asp-97. 2 disulfide bridges follow: Cys-110–Cys-115 and Cys-273–Cys-277. Asp-282 is an active-site residue. Asn-323 is a glycosylation site (N-linked (GlcNAc...) asparagine).

The protein belongs to the peptidase A1 family. In terms of assembly, homodimer; disulfide-linked. Glycosylated. The nature of the carbohydrate chain varies between cell types. In fibroblasts, the proenzyme contains a high mannose-type oligosaccharide, while the mature enzyme contains a complex-type oligosaccharide. As to expression, expressed abundantly in the stomach, club cells and alveolar macrophages of the lung, brain microglia, spleen and activated B-lymphocytes. Not expressed in resting B-lymphocytes.

It is found in the endosome. It catalyses the reaction Similar to cathepsin D, but slightly broader specificity.. May have a role in immune function. Probably involved in the processing of antigenic peptides during MHC class II-mediated antigen presentation. May play a role in activation-induced lymphocyte depletion in the thymus, and in neuronal degeneration and glial cell activation in the brain. This is Cathepsin E (Ctse) from Mus musculus (Mouse).